The chain runs to 242 residues: Type III pantothenate kinase (242 aa).

ATP is bound at residue 7–14 (DLGNSRFK). Substrate is bound by residues Tyr91 and 98 to 101 (GVDR). Asp100 serves as the catalytic Proton acceptor. Thr121 contributes to the ATP binding site. Position 171 (Thr171) interacts with substrate.

The protein belongs to the type III pantothenate kinase family. As to quaternary structure, homodimer. The cofactor is NH4(+). Requires K(+) as cofactor.

It is found in the cytoplasm. It carries out the reaction (R)-pantothenate + ATP = (R)-4'-phosphopantothenate + ADP + H(+). It participates in cofactor biosynthesis; coenzyme A biosynthesis; CoA from (R)-pantothenate: step 1/5. Functionally, catalyzes the phosphorylation of pantothenate (Pan), the first step in CoA biosynthesis. This is Type III pantothenate kinase from Xylella fastidiosa (strain 9a5c).